A 230-amino-acid polypeptide reads, in one-letter code: UPF0688 protein C1orf174 homolog (230 aa).

2 disordered regions span residues 1–85 and 97–166; these read MRSR…SLPK and AEDS…VRAS. Over residues 11–30 the composition is skewed to low complexity; that stretch reads RSSARLRARSYSSASLASAR. A compositionally biased stretch (polar residues) spans 31-48; sequence DVTSSTSAKTTCLASSSH. Residues 49–78 are compositionally biased toward basic and acidic residues; sequence KATDRRTSKKFKYDKGHLVKAELQKLDPKS. Phosphoserine is present on Ser-180.

The protein belongs to the UPF0688 family.

It localises to the nucleus. This is UPF0688 protein C1orf174 homolog from Mus musculus (Mouse).